Consider the following 529-residue polypeptide: V-set and immunoglobulin domain-containing protein 10 (529 aa).

A signal peptide spans 1 to 18 (MMITSAVVLYLLLLSHQT). 2 consecutive Ig-like C2-type domains span residues 19 to 110 (VSEE…QTLS) and 129 to 217 (PATF…QELL). Topologically, residues 21-411 (EEQVQQFVIG…LNVKTSAGNG (391 aa)) are extracellular. Asparagine 34, asparagine 35, asparagine 46, asparagine 135, asparagine 147, asparagine 159, asparagine 211, asparagine 269, asparagine 280, asparagine 284, asparagine 330, asparagine 357, and asparagine 376 each carry an N-linked (GlcNAc...) asparagine glycan. An intrachain disulfide couples cysteine 40 to cysteine 96. A disulfide bond links cysteine 150 and cysteine 199. An Ig-like C2-type 3 domain is found at 317–403 (PTGQPLATAL…GARELEVYLN (87 aa)). Residues cysteine 335 and cysteine 387 are joined by a disulfide bond. The helical transmembrane segment at 412–432 (GAIVGIFVSVLVMMIGIVVGV) threads the bilayer. Topologically, residues 433-529 (TVYTKRDRIC…PQRAELQPAV (97 aa)) are cytoplasmic.

The protein resides in the membrane. The sequence is that of V-set and immunoglobulin domain-containing protein 10 (vsig10) from Danio rerio (Zebrafish).